The primary structure comprises 507 residues: Histidine ammonia-lyase (507 aa).

The segment at residues 141 to 143 is a cross-link (5-imidazolinone (Ala-Gly)); it reads ASG. Ser142 is modified (2,3-didehydroalanine (Ser)).

The protein belongs to the PAL/histidase family. Post-translationally, contains an active site 4-methylidene-imidazol-5-one (MIO), which is formed autocatalytically by cyclization and dehydration of residues Ala-Ser-Gly.

Its subcellular location is the cytoplasm. The catalysed reaction is L-histidine = trans-urocanate + NH4(+). It functions in the pathway amino-acid degradation; L-histidine degradation into L-glutamate; N-formimidoyl-L-glutamate from L-histidine: step 1/3. The protein is Histidine ammonia-lyase of Paraburkholderia phytofirmans (strain DSM 17436 / LMG 22146 / PsJN) (Burkholderia phytofirmans).